We begin with the raw amino-acid sequence, 313 residues long: Aspartate carbamoyltransferase catalytic subunit (313 aa).

The carbamoyl phosphate site is built by Arg58 and Thr59. An L-aspartate-binding site is contributed by Lys86. Residues Arg108, His136, and Gln139 each contribute to the carbamoyl phosphate site. L-aspartate-binding residues include Arg169 and Arg223. Carbamoyl phosphate contacts are provided by Gly264 and Pro265.

Belongs to the aspartate/ornithine carbamoyltransferase superfamily. ATCase family. As to quaternary structure, heterododecamer (2C3:3R2) of six catalytic PyrB chains organized as two trimers (C3), and six regulatory PyrI chains organized as three dimers (R2).

It carries out the reaction carbamoyl phosphate + L-aspartate = N-carbamoyl-L-aspartate + phosphate + H(+). It participates in pyrimidine metabolism; UMP biosynthesis via de novo pathway; (S)-dihydroorotate from bicarbonate: step 2/3. Catalyzes the condensation of carbamoyl phosphate and aspartate to form carbamoyl aspartate and inorganic phosphate, the committed step in the de novo pyrimidine nucleotide biosynthesis pathway. The chain is Aspartate carbamoyltransferase catalytic subunit from Syntrophotalea carbinolica (strain DSM 2380 / NBRC 103641 / GraBd1) (Pelobacter carbinolicus).